We begin with the raw amino-acid sequence, 239 residues long: Proteasome subunit beta type-6 (239 aa).

Position 2 is an N-acetylalanine (Ala2). Positions 2 to 34 (AATLVAARGTRPAPAWGPEAIAPDWENREVSTG) are cleaved as a propeptide — removed in mature form. Residue Thr35 is the Nucleophile of the active site. Thr69 is modified (phosphothreonine).

This sequence belongs to the peptidase T1B family. In terms of assembly, the 26S proteasome consists of a 20S proteasome core and two 19S regulatory subunits. The 20S proteasome core is a barrel-shaped complex made of 28 subunits that are arranged in four stacked rings. The two outer rings are each formed by seven alpha subunits, and the two inner rings are formed by seven beta subunits. The proteolytic activity is exerted by three beta-subunits PSMB5, PSMB6 and PSMB7.

The protein resides in the cytoplasm. It localises to the nucleus. It carries out the reaction Cleavage of peptide bonds with very broad specificity.. In terms of biological role, component of the 20S core proteasome complex involved in the proteolytic degradation of most intracellular proteins. This complex plays numerous essential roles within the cell by associating with different regulatory particles. Associated with two 19S regulatory particles, forms the 26S proteasome and thus participates in the ATP-dependent degradation of ubiquitinated proteins. The 26S proteasome plays a key role in the maintenance of protein homeostasis by removing misfolded or damaged proteins that could impair cellular functions, and by removing proteins whose functions are no longer required. Associated with the PA200 or PA28, the 20S proteasome mediates ubiquitin-independent protein degradation. This type of proteolysis is required in several pathways including spermatogenesis (20S-PA200 complex) or generation of a subset of MHC class I-presented antigenic peptides (20S-PA28 complex). Within the 20S core complex, PSMB6 displays a peptidylglutamyl-hydrolyzing activity also termed postacidic or caspase-like activity, meaning that the peptides bond hydrolysis occurs directly after acidic residues. The protein is Proteasome subunit beta type-6 (PSMB6) of Bos taurus (Bovine).